A 144-amino-acid chain; its full sequence is Protein WAP-3 (144 aa).

Residues 1–21 (MRSRSFLVLVAVFLICETLVA) form the signal peptide. Positions 28-49 (RGPKGQGQDPVEGQDQDEGQGP) are disordered. A region of interest (8 X 6 AA approximate tandem repeats) is located at residue G34. Repeat copies occupy residues 34 to 39 (GQDPVE), 40 to 45 (GQDQDE), 46 to 51 (GQGPVK), 58 to 63 (GQDLVK), 64 to 69 (GQDPVE), 70 to 75 (GQDPVK), 76 to 81 (AQLPDK), and 82 to 87 (VQDPVK). The interval 64–85 (GQDPVEGQDPVKAQLPDKVQDP) is disordered. The WAP domain occupies 97 to 144 (LFPKPGVCPKIIFCPLVNPPIKCWRDSHCPGVKKCCPSLCGKGCVTPR). 4 disulfides stabilise this stretch: C104–C132, C110–C136, C119–C131, and C125–C140.

As to expression, large intestine (relatively low levels).

In Sus scrofa (Pig), this protein is Protein WAP-3.